The primary structure comprises 1055 residues: DIS3-like exonuclease 2 (1055 aa).

Disordered regions lie at residues 1 to 109 (MKSA…SSPE) and 229 to 249 (SAAKPEGTNSPPEKDDKKARQ). The segment covering 17–32 (HKKKRNRPQKQNRRSK) has biased composition (basic residues). The segment covering 39-59 (EDAHVEESLDGRDSSRSKAKD) has biased composition (basic and acidic residues). Low complexity predominate over residues 97–108 (PRRSASPLLSSP). Mg(2+) is bound by residues Asp-488 and Asp-497.

It belongs to the RNR ribonuclease family. DIS3L2 subfamily. The cofactor is Mg(2+). Mn(2+) is required as a cofactor. In terms of tissue distribution, widely expressed.

It localises to the cytoplasm. Its subcellular location is the P-body. Functionally, 3'-5'-exoribonuclease that specifically recognizes RNAs polyuridylated at their 3' end and mediates their degradation. Component of an exosome-independent RNA degradation pathway that mediates degradation of cytoplasmic mRNAs that have been deadenylated and subsequently uridylated at their 3'. The chain is DIS3-like exonuclease 2 (SOV) from Arabidopsis thaliana (Mouse-ear cress).